We begin with the raw amino-acid sequence, 446 residues long: N-succinylarginine dihydrolase (446 aa).

Residues A19–S28, N110, and H137–R138 contribute to the substrate site. Residue E174 is part of the active site. Residue R213 participates in substrate binding. H249 is a catalytic residue. D251 and N364 together coordinate substrate. C370 acts as the Nucleophile in catalysis.

Belongs to the succinylarginine dihydrolase family. As to quaternary structure, homodimer.

It carries out the reaction N(2)-succinyl-L-arginine + 2 H2O + 2 H(+) = N(2)-succinyl-L-ornithine + 2 NH4(+) + CO2. The protein operates within amino-acid degradation; L-arginine degradation via AST pathway; L-glutamate and succinate from L-arginine: step 2/5. In terms of biological role, catalyzes the hydrolysis of N(2)-succinylarginine into N(2)-succinylornithine, ammonia and CO(2). The chain is N-succinylarginine dihydrolase from Burkholderia thailandensis (strain ATCC 700388 / DSM 13276 / CCUG 48851 / CIP 106301 / E264).